A 309-amino-acid chain; its full sequence is Ribonuclease Z (309 aa).

Residues His63, His65, Asp67, His68, His141, Asp212, and His270 each contribute to the Zn(2+) site. The active-site Proton acceptor is the Asp67.

The protein belongs to the RNase Z family. As to quaternary structure, homodimer. Requires Zn(2+) as cofactor.

It catalyses the reaction Endonucleolytic cleavage of RNA, removing extra 3' nucleotides from tRNA precursor, generating 3' termini of tRNAs. A 3'-hydroxy group is left at the tRNA terminus and a 5'-phosphoryl group is left at the trailer molecule.. Zinc phosphodiesterase, which displays some tRNA 3'-processing endonuclease activity. Probably involved in tRNA maturation, by removing a 3'-trailer from precursor tRNA. This chain is Ribonuclease Z, found in Lactobacillus gasseri (strain ATCC 33323 / DSM 20243 / BCRC 14619 / CIP 102991 / JCM 1131 / KCTC 3163 / NCIMB 11718 / NCTC 13722 / AM63).